The following is a 257-amino-acid chain: Imidazole glycerol phosphate synthase subunit HisF (257 aa).

Active-site residues include Asp12 and Asp131.

Belongs to the HisA/HisF family. In terms of assembly, heterodimer of HisH and HisF.

It localises to the cytoplasm. The enzyme catalyses 5-[(5-phospho-1-deoxy-D-ribulos-1-ylimino)methylamino]-1-(5-phospho-beta-D-ribosyl)imidazole-4-carboxamide + L-glutamine = D-erythro-1-(imidazol-4-yl)glycerol 3-phosphate + 5-amino-1-(5-phospho-beta-D-ribosyl)imidazole-4-carboxamide + L-glutamate + H(+). Its pathway is amino-acid biosynthesis; L-histidine biosynthesis; L-histidine from 5-phospho-alpha-D-ribose 1-diphosphate: step 5/9. Its function is as follows. IGPS catalyzes the conversion of PRFAR and glutamine to IGP, AICAR and glutamate. The HisF subunit catalyzes the cyclization activity that produces IGP and AICAR from PRFAR using the ammonia provided by the HisH subunit. The sequence is that of Imidazole glycerol phosphate synthase subunit HisF from Burkholderia vietnamiensis (strain G4 / LMG 22486) (Burkholderia cepacia (strain R1808)).